Here is a 587-residue protein sequence, read N- to C-terminus: DELLA protein GAIP-B (587 aa).

The tract at residues 1–23 is disordered; the sequence is MKREHHHLHPRPDPPSMAAAPNG. Positions 46–50 match the DELLA motif motif; it reads DELLA. The GRAS domain maps to 209-577; the sequence is VDSQENGIQL…RPLIVTSAWK (369 aa). The tract at residues 216-270 is leucine repeat I (LRI); it reads IQLVHALMACAEAVQQNNLNLAEALEKRIGYLAVSQAGAMRKVATFFAEALARRI. The VHIID stretch occupies residues 288–353; it reads QLHFYESSPY…SGPPAFRLTG (66 aa). The short motif at 319-323 is the VHIID element; that stretch reads VHVID. The tract at residues 367–399 is leucine repeat II (LRII); it reads DVGWKLAKLVETINVEFEYRGFVANSLADLDAS. The segment at 411 to 498 is PFYRE; that stretch reads VVVNSVFELH…EMYLGKQICN (88 aa). The short motif at 419–423 is the LXXLL motif element; sequence LHKLL. The tract at residues 501–577 is SAW; it reads ACEGSDRVEW…RPLIVTSAWK (77 aa).

Belongs to the GRAS family. DELLA subfamily. Phosphorylated. In terms of processing, ubiquitinated. Upon GA application it is ubiquitinated, leading to its subsequent degradation.

It is found in the nucleus. In terms of biological role, probable transcriptional regulator that acts as a repressor of the gibberellin (GA) signaling pathway. Probably acts by participating in large multiprotein complexes that represses transcription of GA-inducible genes. Upon GA application, it is degraded by the proteasome, allowing the GA signaling pathway. This is DELLA protein GAIP-B (GAIPB) from Cucurbita maxima (Pumpkin).